A 108-amino-acid chain; its full sequence is Replication restart protein PriB (108 aa).

An SSB domain is found at 8-108 (IDNSFSVMGV…LHAEQIEFID (101 aa)).

Belongs to the PriB family. In terms of assembly, homodimer. Interacts with PriA and DnaT. Component of the replication restart primosome. Primosome assembly occurs via a 'hand-off' mechanism. PriA binds to replication forks, subsequently PriB then DnaT bind; DnaT then displaces ssDNA to generate the helicase loading substrate.

In terms of biological role, involved in the restart of stalled replication forks, which reloads the replicative helicase on sites other than the origin of replication; the PriA-PriB pathway is the major replication restart pathway. During primosome assembly it facilitates complex formation between PriA and DnaT on DNA; stabilizes PriA on DNA. Stimulates the DNA unwinding activity of PriA helicase. The protein is Replication restart protein PriB of Haemophilus influenzae (strain ATCC 51907 / DSM 11121 / KW20 / Rd).